The sequence spans 275 residues: Large ribosomal subunit protein uL2cz (275 aa).

2 disordered regions span residues 1–20 (MAIH…AVDS) and 225–275 (NPVD…RRSK).

The protein belongs to the universal ribosomal protein uL2 family. Part of the 50S ribosomal subunit.

It localises to the plastid. Its subcellular location is the chloroplast. The protein is Large ribosomal subunit protein uL2cz (rpl2-A) of Populus alba (White poplar).